Consider the following 179-residue polypeptide: Putative 5'(3')-deoxyribonucleotidase (179 aa).

Catalysis depends on aspartate 9, which acts as the Nucleophile. Mg(2+) contacts are provided by aspartate 9, aspartate 11, and aspartate 135. The active-site Proton donor is aspartate 11.

The protein belongs to the 5'(3')-deoxyribonucleotidase family. Requires Mg(2+) as cofactor.

Dephosphorylates the 5' and 2'(3')-phosphates of deoxyribonucleotides. The polypeptide is Putative 5'(3')-deoxyribonucleotidase (Staphylococcus epidermidis (strain ATCC 35984 / DSM 28319 / BCRC 17069 / CCUG 31568 / BM 3577 / RP62A)).